Consider the following 749-residue polypeptide: Protein lin-54 homolog (749 aa).

Lysine 139 participates in a covalent cross-link: Glycyl lysine isopeptide (Lys-Gly) (interchain with G-Cter in SUMO2). N6-acetyllysine is present on residues lysine 244 and lysine 249. Residues serine 264, serine 282, serine 310, and serine 314 each carry the phosphoserine modification. Lysine 357 is covalently cross-linked (Glycyl lysine isopeptide (Lys-Gly) (interchain with G-Cter in SUMO2)). Residues 521 to 634 (PRKPCNCTKS…KCIGCKNFEE (114 aa)) enclose the CRC domain. Residues 523–536 (KPCNCTKSLCLKLY) form a DNA-binding region. Zn(2+)-binding residues include cysteine 525, cysteine 527, cysteine 532, cysteine 537, cysteine 539, cysteine 546, cysteine 549, cysteine 551, and cysteine 554. The segment at 583–596 (IGKGKEGESDRRHS) is linker. Cysteine 599, cysteine 601, cysteine 606, cysteine 611, cysteine 613, cysteine 620, cysteine 624, cysteine 626, and cysteine 629 together coordinate Zn(2+). The DNA-binding stretch occupies residues 599-612 (CNCKRSGCLKNYCE). Position 635 is a phosphoserine (serine 635). Glycyl lysine isopeptide (Lys-Gly) (interchain with G-Cter in SUMO2) cross-links involve residues lysine 639, lysine 659, and lysine 661.

Belongs to the lin-54 family. As to quaternary structure, component of the DREAM complex (also named LINC complex) at least composed of E2F4, E2F5, LIN9, LIN37, LIN52, LIN54, MYBL1, MYBL2, RBL1, RBL2, RBBP4, RBL2, TFDP1 and TFDP2. The complex exists in quiescent cells where it represses cell cycle-dependent genes. It dissociates in S phase when LIN9, LIN37, LIN52 and LIN54 form a subcomplex that binds to MYBL2.

It localises to the nucleus. Its function is as follows. Component of the DREAM complex, a multiprotein complex that can both act as a transcription activator or repressor depending on the context. In G0 phase, the complex binds to more than 800 promoters and is required for repression of E2F target genes. In S phase, the complex selectively binds to the promoters of G2/M genes whose products are required for mitosis and participates in their cell cycle dependent activation. In the complex, acts as a DNA-binding protein that binds the promoter of CDK1 in a sequence-specific manner. Specifically recognizes the consensus motif 5'-TTYRAA-3' in target DNA. In Mus musculus (Mouse), this protein is Protein lin-54 homolog (Lin54).